The primary structure comprises 169 residues: Anaerobic nitrite reductase NSHB2 (169 aa).

In terms of domain architecture, Globin spans 16-166 (SFSEEQEALV…LVAAIKQEMK (151 aa)). A Homodimerization motif is present at residues 49–53 (EVAPS). Heme b contacts are provided by Ser-59, Lys-73, His-77, Arg-107, Thr-111, and His-112. The short motif at 119 to 131 (DAHFEVTRFALLE) is the Homodimerization element.

The protein belongs to the plant globin family. Homodimer. Requires heme b as cofactor. Expressed in leaves, but not in roots. Present in embryonic organs including embryos, coleoptiles and seminal roots.

It is found in the cytoplasm. It localises to the nucleus. It carries out the reaction Fe(III)-heme b-[protein] + nitric oxide + H2O = Fe(II)-heme b-[protein] + nitrite + 2 H(+). Its function is as follows. Phytoglobin that reduces nitrite to nitric oxide under anoxic conditions (e.g. during flooding or in waterlogged soil). May not function as an oxygen storage or transport protein. Has an unusually high affinity for O(2) through an hexacoordinate heme iron because of a very low dissociation constant. Promotes tolerance to low potassium K(+) conditions. The chain is Anaerobic nitrite reductase NSHB2 from Oryza sativa subsp. japonica (Rice).